The sequence spans 145 residues: Large ribosomal subunit protein uL15 (145 aa).

The interval M1–L58 is disordered. Positions R19–Q33 are enriched in gly residues.

The protein belongs to the universal ribosomal protein uL15 family. In terms of assembly, part of the 50S ribosomal subunit.

Functionally, binds to the 23S rRNA. This is Large ribosomal subunit protein uL15 from Borrelia garinii subsp. bavariensis (strain ATCC BAA-2496 / DSM 23469 / PBi) (Borreliella bavariensis).